A 227-amino-acid polypeptide reads, in one-letter code: 6-phosphogluconolactonase (227 aa).

Belongs to the glucosamine/galactosamine-6-phosphate isomerase family. 6-phosphogluconolactonase subfamily.

It catalyses the reaction 6-phospho-D-glucono-1,5-lactone + H2O = 6-phospho-D-gluconate + H(+). The protein operates within carbohydrate degradation; pentose phosphate pathway; D-ribulose 5-phosphate from D-glucose 6-phosphate (oxidative stage): step 2/3. In terms of biological role, hydrolysis of 6-phosphogluconolactone to 6-phosphogluconate. This is 6-phosphogluconolactonase (pgl) from Helicobacter pylori (strain J99 / ATCC 700824) (Campylobacter pylori J99).